The chain runs to 133 residues: Salmonella pathogenicity island 2 protein C (133 aa).

In terms of assembly, interacts with the mammalian NIPSNAP3A and HOOK3 proteins in infected cells.

It is found in the secreted. Its subcellular location is the cytoplasm. In terms of biological role, virulence protein that plays a central role in mammalian macrophage infection, by inhibiting phagosome-lysosome fusion and cellular trafficking, including trafficking of organelles that are devoid of Salmonella. May act by disrupting the function of the mammalian HOOK3 protein, a protein involved in the cellular traffic. Also required for actin ADP-ribosylase SpvB activity. The chain is Salmonella pathogenicity island 2 protein C (spiC) from Salmonella typhimurium (strain 14028s / SGSC 2262).